The primary structure comprises 71 residues: MKKKIHPMSLDILATCSCGNSLKIKSTIKKDILLDVCNKCHPFYTGTQKKLNIGGRVSKFKKRFDNIVYKK.

Cysteine 16, cysteine 18, cysteine 37, and cysteine 40 together coordinate Zn(2+).

Belongs to the bacterial ribosomal protein bL31 family. Type A subfamily. In terms of assembly, part of the 50S ribosomal subunit. It depends on Zn(2+) as a cofactor.

Binds the 23S rRNA. The protein is Large ribosomal subunit protein bL31 of Wigglesworthia glossinidia brevipalpis.